Here is a 950-residue protein sequence, read N- to C-terminus: Glycine dehydrogenase (decarboxylating) (950 aa).

N6-(pyridoxal phosphate)lysine is present on Lys-698.

It belongs to the GcvP family. The glycine cleavage system is composed of four proteins: P, T, L and H. It depends on pyridoxal 5'-phosphate as a cofactor.

It catalyses the reaction N(6)-[(R)-lipoyl]-L-lysyl-[glycine-cleavage complex H protein] + glycine + H(+) = N(6)-[(R)-S(8)-aminomethyldihydrolipoyl]-L-lysyl-[glycine-cleavage complex H protein] + CO2. The glycine cleavage system catalyzes the degradation of glycine. The P protein binds the alpha-amino group of glycine through its pyridoxal phosphate cofactor; CO(2) is released and the remaining methylamine moiety is then transferred to the lipoamide cofactor of the H protein. The sequence is that of Glycine dehydrogenase (decarboxylating) from Neisseria meningitidis serogroup C (strain 053442).